Here is a 764-residue protein sequence, read N- to C-terminus: 5-methyltetrahydropteroyltriglutamate--homocysteine methyltransferase (764 aa).

Residues 16 to 19 (RELK) and Lys121 each bind 5-methyltetrahydropteroyltri-L-glutamate. Residues 440–442 (IGS) and Glu493 contribute to the L-homocysteine site. L-methionine-binding positions include 440 to 442 (IGS) and Glu493. 5-methyltetrahydropteroyltri-L-glutamate-binding positions include 524 to 525 (RC) and Trp570. Asp608 contacts L-homocysteine. Asp608 is a binding site for L-methionine. A 5-methyltetrahydropteroyltri-L-glutamate-binding site is contributed by Glu614. Positions 650, 652, and 674 each coordinate Zn(2+). Residue His703 is the Proton donor of the active site. Zn(2+) is bound at residue Cys735.

Belongs to the vitamin-B12 independent methionine synthase family. Zn(2+) is required as a cofactor.

It carries out the reaction 5-methyltetrahydropteroyltri-L-glutamate + L-homocysteine = tetrahydropteroyltri-L-glutamate + L-methionine. Its pathway is amino-acid biosynthesis; L-methionine biosynthesis via de novo pathway; L-methionine from L-homocysteine (MetE route): step 1/1. Functionally, catalyzes the transfer of a methyl group from 5-methyltetrahydrofolate to homocysteine resulting in methionine formation. The polypeptide is 5-methyltetrahydropteroyltriglutamate--homocysteine methyltransferase (Burkholderia lata (strain ATCC 17760 / DSM 23089 / LMG 22485 / NCIMB 9086 / R18194 / 383)).